Reading from the N-terminus, the 152-residue chain is UPF0225 protein YchJ (152 aa).

This sequence belongs to the UPF0225 family.

The polypeptide is UPF0225 protein YchJ (Shigella dysenteriae serotype 1 (strain Sd197)).